The sequence spans 303 residues: Ribosomal RNA small subunit methyltransferase H (303 aa).

S-adenosyl-L-methionine-binding positions include 33–35 (GGH), aspartate 52, phenylalanine 78, aspartate 99, and glutamine 106.

Belongs to the methyltransferase superfamily. RsmH family.

It localises to the cytoplasm. It carries out the reaction cytidine(1402) in 16S rRNA + S-adenosyl-L-methionine = N(4)-methylcytidine(1402) in 16S rRNA + S-adenosyl-L-homocysteine + H(+). Its function is as follows. Specifically methylates the N4 position of cytidine in position 1402 (C1402) of 16S rRNA. The protein is Ribosomal RNA small subunit methyltransferase H of Phytoplasma australiense.